Here is a 701-residue protein sequence, read N- to C-terminus: MNPVIKKFQFGQSTVTLETGRIARQASGAVLVTVDDDVTVLVTVVGAKTADPSKGFFPLSVHYQEKTYAAGKIPGGFFKREGRPSEKETLTSRLIDRPIRPLFPEGFMNEVQVVCTVVSTSKKTDPDIAAMIGTSAALAISGIPFDGPIGAARVAFHESTGYLLNPTYEQQKASSLDMVVAGTSEAVLMVESEAKELTEDQMLGAVLFAHDEFQVVINAVKELAAEAAKPTWTWAPQPEATALLGAIRSEFGAAISDAYTITVKADRYARLGELKDQVVAKLSGEEGQPSSSEVKAAFGEIEYRTVRENIVNGKPRIDGRDTRTVRPLNIEVGVLPKTHGSALFTRGETQALVVATLGTARDAQLLDTLEGEKKDPFMLHYNFPPFSVGECGRMGGAGRREIGHGRLARRSISAMLPAADVFPYTIRVVSEITESNGSSSMASVCGASLALMDAGVPMKAPVAGIAMGLVKEGQKFAILTDILGDEDHLGDMDFKVAGTAKGVTALQMDIKIKGITEEIMEIALGQALEARLNILGQMNQIIGQSRTELSENAPTMIAMKIDTDKIRDVIGKGGATIRAICEETKASIDIEDDGSIKIFGETKEAAEAARQRVLGITAEAEIGKIYVGKVERIVDFGAFVNILPGKDGLVHISMLSDARVEKVTDILKEGQEVEVLVLDVDNRGRIKLSIKDVAAAKASGV.

Residues Asp-487 and Asp-493 each contribute to the Mg(2+) site. In terms of domain architecture, KH spans 554–613 (PTMIAMKIDTDKIRDVIGKGGATIRAICEETKASIDIEDDGSIKIFGETKEAAEAARQRV). Residues 623 to 691 (GKIYVGKVER…NRGRIKLSIK (69 aa)) form the S1 motif domain.

It belongs to the polyribonucleotide nucleotidyltransferase family. As to quaternary structure, component of the RNA degradosome, which is a multiprotein complex involved in RNA processing and mRNA degradation. The cofactor is Mg(2+).

Its subcellular location is the cytoplasm. The catalysed reaction is RNA(n+1) + phosphate = RNA(n) + a ribonucleoside 5'-diphosphate. In terms of biological role, involved in mRNA degradation. Catalyzes the phosphorolysis of single-stranded polyribonucleotides processively in the 3'- to 5'-direction. This chain is Polyribonucleotide nucleotidyltransferase, found in Pseudomonas fluorescens (strain SBW25).